A 198-amino-acid chain; its full sequence is Large ribosomal subunit protein uL23c (198 aa).

Residues 1–76 constitute a chloroplast transit peptide; that stretch reads MATTAPNLHS…SFGRDLMVAQ (76 aa).

The protein belongs to the universal ribosomal protein uL23 family. Component of the chloroplast large ribosomal subunit (LSU). Mature 70S chloroplast ribosomes of higher plants consist of a small (30S) and a large (50S) subunit. The 30S small subunit contains 1 molecule of ribosomal RNA (16S rRNA) and 24 different proteins. The 50S large subunit contains 3 rRNA molecules (23S, 5S and 4.5S rRNA) and 33 different proteins.

The protein resides in the plastid. It is found in the chloroplast. In terms of biological role, component of the chloroplast ribosome (chloro-ribosome), a dedicated translation machinery responsible for the synthesis of chloroplast genome-encoded proteins, including proteins of the transcription and translation machinery and components of the photosynthetic apparatus. This is Large ribosomal subunit protein uL23c (RPL23) from Spinacia oleracea (Spinach).